A 572-amino-acid chain; its full sequence is Urease subunit alpha (572 aa).

Residues 134–572 (GGIDSHIHFI…LPLAQRYFLF (439 aa)) enclose the Urease domain. Ni(2+)-binding residues include His-139, His-141, and Lys-222. Lys-222 carries the post-translational modification N6-carboxylysine. A substrate-binding site is contributed by His-224. Positions 251 and 277 each coordinate Ni(2+). The active-site Proton donor is the His-325. Position 365 (Asp-365) interacts with Ni(2+).

Belongs to the metallo-dependent hydrolases superfamily. Urease alpha subunit family. Heterotrimer of UreA (gamma), UreB (beta) and UreC (alpha) subunits. Three heterotrimers associate to form the active enzyme. The cofactor is Ni cation. Post-translationally, carboxylation allows a single lysine to coordinate two nickel ions.

It localises to the cytoplasm. It catalyses the reaction urea + 2 H2O + H(+) = hydrogencarbonate + 2 NH4(+). It participates in nitrogen metabolism; urea degradation; CO(2) and NH(3) from urea (urease route): step 1/1. The protein is Urease subunit alpha of Paracidovorax citrulli (strain AAC00-1) (Acidovorax citrulli).